The primary structure comprises 125 residues: Probable endoribonuclease HigB1 (125 aa).

It belongs to the mycobacterial HigB family.

Toxic component of an atypical, type II toxin-antitoxin chaperone (TAC) system. Probably an endoribonuclease, neutralized by its cognate antitoxin HigA which also requires SecB-like chaperone MT2006 (AC Q7D7P7). This chain is Probable endoribonuclease HigB1, found in Mycobacterium tuberculosis (strain CDC 1551 / Oshkosh).